The primary structure comprises 132 residues: MVMTDPIADMLTRIRNANMVRHEKLEVPASKIKREIAEILKREGFIRDVEYIEDNKQGILRIFLKYGPNNERVITGLKRISKPGLRVYVKAHEVPRVLNGLGIAILSTSQGILTDKEARQKGTGGEVIAYVW.

It belongs to the universal ribosomal protein uS8 family. In terms of assembly, part of the 30S ribosomal subunit. Contacts proteins S5 and S12.

Its function is as follows. One of the primary rRNA binding proteins, it binds directly to 16S rRNA central domain where it helps coordinate assembly of the platform of the 30S subunit. The sequence is that of Small ribosomal subunit protein uS8 from Geobacillus thermodenitrificans (strain NG80-2).